The chain runs to 226 residues: Phosphoglycolate phosphatase (226 aa).

Aspartate 9 functions as the Nucleophile in the catalytic mechanism. Positions 9 and 11 each coordinate Mg(2+). Lysine 150 is a binding site for substrate. Residues aspartate 173 and aspartate 177 each contribute to the Mg(2+) site.

Belongs to the archaeal SPP-like hydrolase family. Mg(2+) serves as cofactor.

It carries out the reaction 2-phosphoglycolate + H2O = glycolate + phosphate. Functionally, catalyzes the dephosphorylation of 2-phosphoglycolate. This Methanococcoides burtonii (strain DSM 6242 / NBRC 107633 / OCM 468 / ACE-M) protein is Phosphoglycolate phosphatase.